Here is a 158-residue protein sequence, read N- to C-terminus: GAF domain-containing protein A (158 aa).

One can recognise a GAF domain in the interval 32–158 (NQIANLANVT…LTQILKLLDN (127 aa)).

This sequence belongs to the free Met sulfoxide reductase family.

The polypeptide is GAF domain-containing protein A (gafA) (Dictyostelium discoideum (Social amoeba)).